The following is a 486-amino-acid chain: ATP synthase subunit beta (486 aa).

164-171 provides a ligand contact to ATP; that stretch reads GGAGVGKT.

Belongs to the ATPase alpha/beta chains family. As to quaternary structure, F-type ATPases have 2 components, CF(1) - the catalytic core - and CF(0) - the membrane proton channel. CF(1) has five subunits: alpha(3), beta(3), gamma(1), delta(1), epsilon(1). CF(0) has four main subunits: a(1), b(1), b'(1) and c(9-12).

The protein resides in the cellular thylakoid membrane. The catalysed reaction is ATP + H2O + 4 H(+)(in) = ADP + phosphate + 5 H(+)(out). Produces ATP from ADP in the presence of a proton gradient across the membrane. The catalytic sites are hosted primarily by the beta subunits. In Prochlorococcus marinus (strain MIT 9301), this protein is ATP synthase subunit beta.